Reading from the N-terminus, the 672-residue chain is Fumonisin cluster-specific transcription factor FUM21 (672 aa).

Positions 30-56 (CESCKRRKVRCNGTNPCNQCQKSSIEC) form a DNA-binding region, zn(2)-C6 fungal-type. 2 disordered regions span residues 65-111 (ANDG…RFDG) and 190-212 (KSSG…GFNT). Residues 77 to 93 (SPVQHTRGSLTPPQTSP) show a composition bias toward polar residues.

Its subcellular location is the nucleus. Functionally, transcription factor that regulates the expression of the gene cluster that mediates the biosynthesis of fumonisins B1 (FB1), B2 (FB2), B3 (FB3), and B4 (FB4), which are carcinogenic mycotoxins. This Gibberella moniliformis (strain M3125 / FGSC 7600) (Maize ear and stalk rot fungus) protein is Fumonisin cluster-specific transcription factor FUM21 (FUM21).